Consider the following 341-residue polypeptide: NADH-quinone oxidoreductase subunit H (341 aa).

Transmembrane regions (helical) follow at residues 4–24, 38–58, 70–90, 115–135, 161–181, 187–207, 239–259, 275–295, and 314–334; these read LVNI…LTYF, PSVV…KLLI, ILFI…WAVI, VGVL…IIAG, IGLI…GEMV, MPFW…ISLL, LFFL…TIFF, IPGL…FIWI, and VFLP…LFTG.

Belongs to the complex I subunit 1 family. As to quaternary structure, NDH-1 is composed of 14 different subunits. Subunits NuoA, H, J, K, L, M, N constitute the membrane sector of the complex.

The protein resides in the cell membrane. It carries out the reaction a quinone + NADH + 5 H(+)(in) = a quinol + NAD(+) + 4 H(+)(out). In terms of biological role, NDH-1 shuttles electrons from NADH, via FMN and iron-sulfur (Fe-S) centers, to quinones in the respiratory chain. The immediate electron acceptor for the enzyme in this species is believed to be ubiquinone. Couples the redox reaction to proton translocation (for every two electrons transferred, four hydrogen ions are translocated across the cytoplasmic membrane), and thus conserves the redox energy in a proton gradient. This subunit may bind ubiquinone. In Wolbachia pipientis wMel, this protein is NADH-quinone oxidoreductase subunit H.